A 160-amino-acid chain; its full sequence is Ribosomal RNA large subunit methyltransferase H (160 aa).

S-adenosyl-L-methionine-binding residues include L76 and G108.

Belongs to the RNA methyltransferase RlmH family. In terms of assembly, homodimer.

The protein localises to the cytoplasm. The enzyme catalyses pseudouridine(1915) in 23S rRNA + S-adenosyl-L-methionine = N(3)-methylpseudouridine(1915) in 23S rRNA + S-adenosyl-L-homocysteine + H(+). Specifically methylates the pseudouridine at position 1915 (m3Psi1915) in 23S rRNA. In Afipia carboxidovorans (strain ATCC 49405 / DSM 1227 / KCTC 32145 / OM5) (Oligotropha carboxidovorans), this protein is Ribosomal RNA large subunit methyltransferase H.